Here is a 470-residue protein sequence, read N- to C-terminus: Tryptophan synthase beta chain 1, chloroplastic (470 aa).

The segment covering Met1–Phe10 has biased composition (polar residues). A disordered region spans residues Met1–Leu24. A compositionally biased stretch (low complexity) spans Ala12–Ser22. Lys165 is modified (N6-(pyridoxal phosphate)lysine).

The protein belongs to the TrpB family. In terms of assembly, tetramer of two alpha and two beta chains. The cofactor is pyridoxal 5'-phosphate.

The protein localises to the plastid. The protein resides in the chloroplast. The catalysed reaction is (1S,2R)-1-C-(indol-3-yl)glycerol 3-phosphate + L-serine = D-glyceraldehyde 3-phosphate + L-tryptophan + H2O. Its pathway is amino-acid biosynthesis; L-tryptophan biosynthesis; L-tryptophan from chorismate: step 5/5. The beta subunit is responsible for the synthesis of L-tryptophan from indole and L-serine. This is Tryptophan synthase beta chain 1, chloroplastic (TSB1) from Arabidopsis thaliana (Mouse-ear cress).